Reading from the N-terminus, the 953-residue chain is Ribonuclease E (953 aa).

2 disordered regions span residues 1–23 (MIDG…PDRL) and 118–314 (VAPQ…RRRP). The segment covering 14–23 (SQHEELPDRL) has biased composition (basic and acidic residues). Acidic residues predominate over residues 127–150 (LADDEDVDDGPDYVADDSDADDEG). Residues 157 to 169 (NRRRRRGRRGRGR) are compositionally biased toward basic residues. Residues 183–193 (DQQSEPRAQQF) show a composition bias toward polar residues. Over residues 199 to 223 (AETDDGDDRDSEDTEAGDNGEDENG) the composition is skewed to acidic residues. The segment covering 230–240 (RRRRRRRRRKS) has biased composition (basic residues). 2 stretches are compositionally biased toward basic and acidic residues: residues 263–272 (VHERVPRAGD) and 294–311 (TRLE…DAGR). The region spanning 376–453 (GNIYLGIVQN…GHKGARLTTQ (78 aa)) is the S1 motif domain. Mg(2+)-binding residues include D647 and D691. Residues C749 and C752 each contribute to the Zn(2+) site. 2 disordered regions span residues 766-808 (SAAA…APGE) and 822-953 (LAGR…IRLD). Positions 848–915 (DLDDTAQADF…DADVDEEDAA (68 aa)) are enriched in acidic residues.

Belongs to the RNase E/G family. In terms of assembly, assembles into a homotetramer formed by a dimer of dimers. Interacts with DNA-binding protein HU (hupB). It depends on Mg(2+) as a cofactor. The cofactor is Zn(2+).

The protein localises to the cytoplasm. It carries out the reaction Endonucleolytic cleavage of single-stranded RNA in A- and U-rich regions.. Endoribonuclease that plays a central role in RNA processing and decay. Plays a major role in pre-16S rRNA maturation, probably generating the mature 5'-end, and a minor role in pre-5S and pre-23S rRNA maturation. Probably also processes tRNA. RNase E and HupB jointly contribute to cellular adaptation to changing growth conditions and survival during antibiotic treatment and in the host. In Mycobacterium tuberculosis (strain ATCC 25618 / H37Rv), this protein is Ribonuclease E.